An 87-amino-acid chain; its full sequence is Large ribosomal subunit protein uL23c (87 aa).

The protein belongs to the universal ribosomal protein uL23 family. As to quaternary structure, part of the 50S ribosomal subunit.

Its subcellular location is the plastid. It is found in the chloroplast. Functionally, binds to 23S rRNA. In Ostreococcus tauri, this protein is Large ribosomal subunit protein uL23c (rpl23).